We begin with the raw amino-acid sequence, 445 residues long: Disintegrin and metalloproteinase domain-containing protein 18 (445 aa).

The Peptidase M12B domain maps to 1-106; it reads IYRKHLKYIG…LDMQCLGDLS (106 aa). Residues 1–409 lie on the Extracellular side of the membrane; sequence IYRKHLKYIG…TKRLSQHADS (409 aa). 3 disulfide bridges follow: cysteine 18/cysteine 101, cysteine 60/cysteine 85, and cysteine 62/cysteine 67. 2 N-linked (GlcNAc...) asparagine glycosylation sites follow: asparagine 19 and asparagine 59. Asparagine 84 and asparagine 131 each carry an N-linked (GlcNAc...) asparagine glycan. A Disintegrin domain is found at 113–202; the sequence is QSVCGNGIVE…HCVPDTFALD (90 aa). Cysteine 173 and cysteine 194 form a disulfide bridge. Residues asparagine 333 and asparagine 340 are each glycosylated (N-linked (GlcNAc...) asparagine). The EGF-like domain occupies 342–376; the sequence is TGNDCNAAKKCKGNGICNNFGHCQCFPDYRPPDCN. 3 cysteine pairs are disulfide-bonded: cysteine 346–cysteine 358, cysteine 352–cysteine 364, and cysteine 366–cysteine 375. Residues 410–430 form a helical membrane-spanning segment; it reads WVILGFFIFLPFIMTLFLGII. The Cytoplasmic segment spans residues 431–445; that stretch reads KRNERKIVPQKEQER.

The prodomain and the metalloprotease-like domain are cleaved during the epididymal maturation of the spermatozoa. Expressed specifically in testis.

Its subcellular location is the membrane. Functionally, sperm surface membrane protein that may be involved in spermatogenesis and fertilization. This is a non catalytic metalloprotease-like protein. The protein is Disintegrin and metalloproteinase domain-containing protein 18 (Adam18) of Rattus norvegicus (Rat).